Here is a 244-residue protein sequence, read N- to C-terminus: Claudin-12 (244 aa).

At 1-10 (MGCRDVHAAT) the chain is on the cytoplasmic side. The chain crosses the membrane as a helical span at residues 11 to 31 (VLSFLCGIASVAGLFAGTLLP). Topologically, residues 32 to 87 (NWRKLRLITFNRNEKNLTVYTGLWVKCARYDGGNDCLMYDAAWYSSVDQLDLRVLQ) are extracellular. The chain crosses the membrane as a helical span at residues 88–108 (FALPLSILIAMGALLLCLIGM). Topologically, residues 109-135 (CNTAFRSSVPNIKLAKCLVNSAGCHLV) are cytoplasmic. Residues 136 to 156 (AGLLFFLAGTVSLSPSIWVIF) form a helical membrane-spanning segment. Topologically, residues 157-174 (YNIHLNRKFEPVFAFDYA) are extracellular. The helical transmembrane segment at 175–195 (VYVTVASAGGLFMTALLLFIW) threads the bilayer. Topologically, residues 196 to 244 (YCACKSLPSPFWQPLYSHPPGMHTYSQPYSARSRLSAIEIDIPVVSHTT) are cytoplasmic. Phosphoserine occurs at positions 228 and 231.

It belongs to the claudin family. Interacts with OCLN.

Its subcellular location is the cell junction. It is found in the tight junction. The protein localises to the cell membrane. In terms of biological role, plays a major role in tight junction-specific obliteration of the intercellular space, through calcium-independent cell-adhesion activity. This Bos taurus (Bovine) protein is Claudin-12 (CLDN12).